The sequence spans 155 residues: Secreted RxLR effector protein RXLR-C301 (155 aa).

An N-terminal signal peptide occupies residues 1-24; the sequence is MRLYALSVSLLAAITLLACVIASA. Positions 34-64 match the RxLR-dEER motif; sequence RRLSQDVSETEITELSESKKPTAQDIDNEER.

The protein belongs to the RxLR effector family.

The protein localises to the secreted. Its subcellular location is the host cell membrane. Secreted effector that does not suppress pattern-triggered immunity (PTI) in plant host. The sequence is that of Secreted RxLR effector protein RXLR-C301 from Plasmopara halstedii (Downy mildew of sunflower).